The primary structure comprises 122 residues: Small ribosomal subunit protein uS13 (122 aa).

The tract at residues K94–K122 is disordered.

This sequence belongs to the universal ribosomal protein uS13 family. As to quaternary structure, part of the 30S ribosomal subunit. Forms a loose heterodimer with protein S19. Forms two bridges to the 50S subunit in the 70S ribosome.

Its function is as follows. Located at the top of the head of the 30S subunit, it contacts several helices of the 16S rRNA. In the 70S ribosome it contacts the 23S rRNA (bridge B1a) and protein L5 of the 50S subunit (bridge B1b), connecting the 2 subunits; these bridges are implicated in subunit movement. Contacts the tRNAs in the A and P-sites. The chain is Small ribosomal subunit protein uS13 from Methylorubrum extorquens (strain PA1) (Methylobacterium extorquens).